Here is a 418-residue protein sequence, read N- to C-terminus: AP-3 complex subunit mu-1 (418 aa).

Positions 176–417 (NNEAYFDVIE…ITKAGKFQVR (242 aa)) constitute an MHD domain.

It belongs to the adaptor complexes medium subunit family. The AP-3 complex associates with the BLOC-1 complex.

The protein localises to the golgi apparatus. Its subcellular location is the cytoplasmic vesicle membrane. Its function is as follows. Part of the AP-3 complex, an adaptor-related complex which is not clathrin-associated. The complex is associated with the Golgi region as well as more peripheral structures. It facilitates the budding of vesicles from the Golgi membrane and may be directly involved in trafficking to lysosomes. In concert with the BLOC-1 complex, AP-3 is required to target cargos into vesicles assembled at cell bodies for delivery into neurites and nerve terminals. The protein is AP-3 complex subunit mu-1 (AP3M1) of Gallus gallus (Chicken).